A 65-amino-acid polypeptide reads, in one-letter code: Small ribosomal subunit protein eS27 (65 aa).

4 residues coordinate Zn(2+): C20, C23, C39, and C42. The C4-type zinc-finger motif lies at 20–42 (CIDCGNEQIVFSHPATKVRCLVC).

The protein belongs to the eukaryotic ribosomal protein eS27 family. In terms of assembly, part of the 30S ribosomal subunit. The cofactor is Zn(2+).

This Thermococcus gammatolerans (strain DSM 15229 / JCM 11827 / EJ3) protein is Small ribosomal subunit protein eS27.